We begin with the raw amino-acid sequence, 241 residues long: 1-(5-phosphoribosyl)-5-[(5-phosphoribosylamino)methylideneamino] imidazole-4-carboxamide isomerase (241 aa).

The Proton acceptor role is filled by Asp7. Asp129 functions as the Proton donor in the catalytic mechanism.

This sequence belongs to the HisA/HisF family.

The protein resides in the cytoplasm. The catalysed reaction is 1-(5-phospho-beta-D-ribosyl)-5-[(5-phospho-beta-D-ribosylamino)methylideneamino]imidazole-4-carboxamide = 5-[(5-phospho-1-deoxy-D-ribulos-1-ylimino)methylamino]-1-(5-phospho-beta-D-ribosyl)imidazole-4-carboxamide. It participates in amino-acid biosynthesis; L-histidine biosynthesis; L-histidine from 5-phospho-alpha-D-ribose 1-diphosphate: step 4/9. The chain is 1-(5-phosphoribosyl)-5-[(5-phosphoribosylamino)methylideneamino] imidazole-4-carboxamide isomerase from Buchnera aphidicola subsp. Baizongia pistaciae (strain Bp).